The sequence spans 92 residues: Putative regulatory protein CKL_1364 (92 aa).

The protein belongs to the RemA family.

The protein is Putative regulatory protein CKL_1364 of Clostridium kluyveri (strain ATCC 8527 / DSM 555 / NBRC 12016 / NCIMB 10680 / K1).